A 101-amino-acid polypeptide reads, in one-letter code: Small ribosomal subunit protein uS14 (101 aa).

Belongs to the universal ribosomal protein uS14 family. In terms of assembly, part of the 30S ribosomal subunit. Contacts proteins S3 and S10.

Binds 16S rRNA, required for the assembly of 30S particles and may also be responsible for determining the conformation of the 16S rRNA at the A site. The chain is Small ribosomal subunit protein uS14 from Leifsonia xyli subsp. xyli (strain CTCB07).